Consider the following 353-residue polypeptide: Quinolinate synthase (353 aa).

2 residues coordinate iminosuccinate: His47 and Ser68. Residue Cys113 participates in [4Fe-4S] cluster binding. Iminosuccinate contacts are provided by residues 139–141 (YAN) and Ser156. A [4Fe-4S] cluster-binding site is contributed by Cys200. Iminosuccinate is bound by residues 226-228 (HPE) and Thr243. Cys297 serves as a coordination point for [4Fe-4S] cluster.

The protein belongs to the quinolinate synthase family. Type 1 subfamily. [4Fe-4S] cluster serves as cofactor.

It localises to the cytoplasm. The catalysed reaction is iminosuccinate + dihydroxyacetone phosphate = quinolinate + phosphate + 2 H2O + H(+). It functions in the pathway cofactor biosynthesis; NAD(+) biosynthesis; quinolinate from iminoaspartate: step 1/1. Its function is as follows. Catalyzes the condensation of iminoaspartate with dihydroxyacetone phosphate to form quinolinate. The sequence is that of Quinolinate synthase from Pectobacterium carotovorum subsp. carotovorum (strain PC1).